The following is a 381-amino-acid chain: Succinyl-diaminopimelate desuccinylase (381 aa).

Histidine 72 provides a ligand contact to Zn(2+). The active site involves aspartate 74. Aspartate 105 provides a ligand contact to Zn(2+). The active-site Proton acceptor is glutamate 139. Positions 140, 168, and 354 each coordinate Zn(2+).

It belongs to the peptidase M20A family. DapE subfamily. As to quaternary structure, homodimer. The cofactor is Zn(2+). It depends on Co(2+) as a cofactor.

It catalyses the reaction N-succinyl-(2S,6S)-2,6-diaminopimelate + H2O = (2S,6S)-2,6-diaminopimelate + succinate. Its pathway is amino-acid biosynthesis; L-lysine biosynthesis via DAP pathway; LL-2,6-diaminopimelate from (S)-tetrahydrodipicolinate (succinylase route): step 3/3. Catalyzes the hydrolysis of N-succinyl-L,L-diaminopimelic acid (SDAP), forming succinate and LL-2,6-diaminopimelate (DAP), an intermediate involved in the bacterial biosynthesis of lysine and meso-diaminopimelic acid, an essential component of bacterial cell walls. The chain is Succinyl-diaminopimelate desuccinylase from Shewanella sp. (strain MR-7).